The sequence spans 220 residues: Urease accessory protein UreF (220 aa).

It belongs to the UreF family. UreD, UreF and UreG form a complex that acts as a GTP-hydrolysis-dependent molecular chaperone, activating the urease apoprotein by helping to assemble the nickel containing metallocenter of UreC. The UreE protein probably delivers the nickel.

The protein localises to the cytoplasm. Its function is as follows. Required for maturation of urease via the functional incorporation of the urease nickel metallocenter. This Bordetella bronchiseptica (strain ATCC BAA-588 / NCTC 13252 / RB50) (Alcaligenes bronchisepticus) protein is Urease accessory protein UreF.